The following is a 146-amino-acid chain: Cysteine protease inhibitor 3 (146 aa).

Cystine bridges form between cysteine 8–cysteine 60 and cysteine 109–cysteine 115.

This sequence belongs to the protease inhibitor I3 (leguminous Kunitz-type inhibitor) family.

The protein localises to the vacuole. Functionally, inhibitor of cysteine proteases. May protect the plant by inhibiting proteases of invading organisms. In Solanum tuberosum (Potato), this protein is Cysteine protease inhibitor 3.